A 237-amino-acid chain; its full sequence is DCN1-like protein 5 (237 aa).

Phosphoserine occurs at positions 9, 41, and 48. Positions F46 to K232 constitute a DCUN1 domain.

As to quaternary structure, part of a complex that contains DCUN1D5, CUL1 and RBX1; this interaction is bridged by CUL1. Interacts (via the DCUN1 domain) with the unneddylated cullins: interacts with CUL1, CUL2, CUL3, CUL4A, CUL4B and CUL5; these interactions promote the cullin neddylation and the identity of the cullin dictates the affinity of the interaction. Interacts (via DCUN1 domain) with UBE2M (N-terminally acetylated form) and probably with UBE2F (N-terminally acetylated form). May also interact with regulators or subunits of cullin-RING ligases such as RBX1, RNF7, ELOB and DDB1; these interactions are bridged by cullins. Interacts with CAND1; this interaction is bridged by cullins and strongly inhibits the neddylation of cullins. These CAND-cullin-DCNL complexes can only be neddylated in the presence of a substrate adapter. Post-translationally, phosphorylation at Ser-41 is independent of cullin's interaction. Phosphorylated in response to both TICAM1 and MYD88 dependent Toll-like receptor (TLR) pathway activation. Phosphorylated in response to IL1B stimulation. In terms of tissue distribution, weakly expressed in testis, skin and immune tissues (thymus, spleen and lymph nodes).

It is found in the nucleus. The protein resides in the cytoplasm. Its subcellular location is the cytoskeleton. The protein localises to the spindle. Functionally, contributes to the neddylation of all cullins by transferring NEDD8 from N-terminally acetylated NEDD8-conjugating E2s enzyme to different cullin C-terminal domain-RBX complexes which is necessary for the activation of cullin-RING E3 ubiquitin ligases (CRLs). May play a role in DNA damage response and may participate in cell proliferation and anchorage-independent cell growth. In Homo sapiens (Human), this protein is DCN1-like protein 5.